The primary structure comprises 348 residues: 3-isopropylmalate dehydrogenase (348 aa).

76 to 87 (GPKWTDPNNRPE) provides a ligand contact to NAD(+). Positions 94, 104, 132, and 217 each coordinate substrate. Positions 217, 241, and 245 each coordinate Mg(2+). 275–287 (GSAPDIAGKNVAN) contributes to the NAD(+) binding site.

It belongs to the isocitrate and isopropylmalate dehydrogenases family. LeuB type 1 subfamily. Homodimer. It depends on Mg(2+) as a cofactor. Mn(2+) serves as cofactor.

It is found in the cytoplasm. The catalysed reaction is (2R,3S)-3-isopropylmalate + NAD(+) = 4-methyl-2-oxopentanoate + CO2 + NADH. Its pathway is amino-acid biosynthesis; L-leucine biosynthesis; L-leucine from 3-methyl-2-oxobutanoate: step 3/4. In terms of biological role, catalyzes the oxidation of 3-carboxy-2-hydroxy-4-methylpentanoate (3-isopropylmalate) to 3-carboxy-4-methyl-2-oxopentanoate. The product decarboxylates to 4-methyl-2 oxopentanoate. The polypeptide is 3-isopropylmalate dehydrogenase (Staphylococcus aureus (strain MW2)).